The sequence spans 154 residues: Putative thioredoxin H10 (154 aa).

The region spanning 24 to 148 (NNNNSYGQTR…LQKKTAAAAD (125 aa)) is the Thioredoxin domain. Residues Cys74 and Cys77 each act as nucleophile in the active site. Cys74 and Cys77 are oxidised to a cystine.

This sequence belongs to the thioredoxin family.

It localises to the cytoplasm. Probable thiol-disulfide oxidoreductase that may be involved in the redox regulation of a number of cytosolic enzymes. The chain is Putative thioredoxin H10 from Arabidopsis thaliana (Mouse-ear cress).